We begin with the raw amino-acid sequence, 496 residues long: Glutamyl-tRNA(Gln) amidotransferase subunit A (496 aa).

Catalysis depends on charge relay system residues Lys-75 and Ser-150. The active-site Acyl-ester intermediate is Ser-174.

It belongs to the amidase family. GatA subfamily. In terms of assembly, heterotrimer of A, B and C subunits.

The catalysed reaction is L-glutamyl-tRNA(Gln) + L-glutamine + ATP + H2O = L-glutaminyl-tRNA(Gln) + L-glutamate + ADP + phosphate + H(+). In terms of biological role, allows the formation of correctly charged Gln-tRNA(Gln) through the transamidation of misacylated Glu-tRNA(Gln) in organisms which lack glutaminyl-tRNA synthetase. The reaction takes place in the presence of glutamine and ATP through an activated gamma-phospho-Glu-tRNA(Gln). The protein is Glutamyl-tRNA(Gln) amidotransferase subunit A of Burkholderia vietnamiensis (strain G4 / LMG 22486) (Burkholderia cepacia (strain R1808)).